The chain runs to 56 residues: ComX pheromone (56 aa).

A propeptide spanning residues 1–50 (MMQDLINYFLSYPEVLKKLKNREACLIGFSSNETETIIKAYNDYHLSSPT) is cleaved from the precursor. Tryptophan derivative is present on W54. Residue W54 is the site of 3'-farnesyl-2',N2-cyclotryptophan attachment.

Interacts directly with the sensor histidine kinase ComP and stimulates its activity. Trp-54 is modified by farnesylation, which is essential for activity. Modified by the tryptophan prenyltransferase ComQ before export to the extracellular environment. The type of isoprenyl derivative differs among the different pherotypes and depends on ComX primary sequence.

Its subcellular location is the secreted. Part of a major quorum-sensing system that regulates the development of genetic competence. Acts through the activation of the two-component regulatory system ComP/ComA composed of a sensor histidine kinase, ComP, and a response regulator, ComA. The chain is ComX pheromone from Bacillus mojavensis.